Consider the following 169-residue polypeptide: Short form salivary protein D7R3 (169 aa).

The first 21 residues, 1–21 (MFGKLLPCAILVWCLFSLGQA), serve as a signal peptide directing secretion. Cystine bridges form between Cys-30-Cys-62, Cys-43-Cys-168, and Cys-101-Cys-120. Noradrenaline is bound by residues Glu-31 and Arg-46. Glu-31 is a binding site for serotonin. Serotonin-binding residues include His-59, Tyr-118, Asp-135, and Glu-138. 3 residues coordinate histamine: Tyr-118, Asp-135, and Glu-138. 2 residues coordinate noradrenaline: Asp-135 and Glu-138.

It belongs to the PBP/GOBP family. In terms of tissue distribution, female saliva (at protein level). Female salivary gland. Low-level expression in female carcass without salivary glands. Not detected in male tissues.

It localises to the secreted. Its function is as follows. Modulates blood feeding of female mosquitoes on vertebrate species by binding and sequestering different mediators involved in the host response. Binds serotonin, noradrenaline, histamine and adrenaline. Inhibits histamine-, serotonin- and noradrenaline-induced smooth muscle contraction. Exhibits vasodilating activity. The chain is Short form salivary protein D7R3 from Anopheles gambiae (African malaria mosquito).